The primary structure comprises 53 residues: Light-harvesting protein B-800/820 alpha chain (53 aa).

The Cytoplasmic segment spans residues 1 to 14 (MNQGKIWTVVNPAV). Residues 15 to 35 (GLPLLLGSVAITALLVHLAVL) form a helical membrane-spanning segment. A bacteriochlorophyll is bound at residue histidine 31. The Periplasmic segment spans residues 36 to 53 (THTTWFPAFTQGGLKKAA).

It belongs to the antenna complex alpha subunit family. The core complex is formed by different alpha and beta chains, binding bacteriochlorophyll molecules, and arranged most probably in tetrameric structures disposed around the reaction center. The non-pigmented gamma chains may constitute additional components.

It is found in the cell inner membrane. Its function is as follows. Antenna complexes are light-harvesting systems, which transfer the excitation energy to the reaction centers. This is Light-harvesting protein B-800/820 alpha chain from Rhodoblastus acidophilus (Rhodopseudomonas acidophila).